The chain runs to 213 residues: NADH-quinone oxidoreductase subunit C (213 aa).

This sequence belongs to the complex I 30 kDa subunit family. In terms of assembly, NDH-1 is composed of 15 different subunits. Subunits NuoB, C, D, E, F, and G constitute the peripheral sector of the complex.

It is found in the cell membrane. It catalyses the reaction a quinone + NADH + 5 H(+)(in) = a quinol + NAD(+) + 4 H(+)(out). Its function is as follows. NDH-1 shuttles electrons from NADH, via FMN and iron-sulfur (Fe-S) centers, to quinones in the respiratory chain. The immediate electron acceptor for the enzyme in this species is believed to be a menaquinone. Couples the redox reaction to proton translocation (for every two electrons transferred, four hydrogen ions are translocated across the cytoplasmic membrane), and thus conserves the redox energy in a proton gradient. The chain is NADH-quinone oxidoreductase subunit C from Deinococcus geothermalis (strain DSM 11300 / CIP 105573 / AG-3a).